The primary structure comprises 616 residues: Dihydroxy-acid dehydratase (616 aa).

D81 serves as a coordination point for Mg(2+). C122 provides a ligand contact to [2Fe-2S] cluster. The Mg(2+) site is built by D123 and K124. K124 bears the N6-carboxylysine mark. Residue C195 coordinates [2Fe-2S] cluster. Position 491 (E491) interacts with Mg(2+). The active-site Proton acceptor is the S517.

This sequence belongs to the IlvD/Edd family. In terms of assembly, homodimer. Requires [2Fe-2S] cluster as cofactor. It depends on Mg(2+) as a cofactor.

The enzyme catalyses (2R)-2,3-dihydroxy-3-methylbutanoate = 3-methyl-2-oxobutanoate + H2O. It catalyses the reaction (2R,3R)-2,3-dihydroxy-3-methylpentanoate = (S)-3-methyl-2-oxopentanoate + H2O. The protein operates within amino-acid biosynthesis; L-isoleucine biosynthesis; L-isoleucine from 2-oxobutanoate: step 3/4. It participates in amino-acid biosynthesis; L-valine biosynthesis; L-valine from pyruvate: step 3/4. In terms of biological role, functions in the biosynthesis of branched-chain amino acids. Catalyzes the dehydration of (2R,3R)-2,3-dihydroxy-3-methylpentanoate (2,3-dihydroxy-3-methylvalerate) into 2-oxo-3-methylpentanoate (2-oxo-3-methylvalerate) and of (2R)-2,3-dihydroxy-3-methylbutanoate (2,3-dihydroxyisovalerate) into 2-oxo-3-methylbutanoate (2-oxoisovalerate), the penultimate precursor to L-isoleucine and L-valine, respectively. The sequence is that of Dihydroxy-acid dehydratase from Shigella boydii serotype 4 (strain Sb227).